Reading from the N-terminus, the 189-residue chain is Shikimate kinase (189 aa).

An ATP-binding site is contributed by 22–27 (ASGKST). Ser-26 serves as a coordination point for Mg(2+). Residues Asp-44, Arg-68, and Gly-90 each contribute to the substrate site. ATP is bound at residue Arg-128. Arg-147 is a substrate binding site.

It belongs to the shikimate kinase family. As to quaternary structure, monomer. Requires Mg(2+) as cofactor.

Its subcellular location is the cytoplasm. It catalyses the reaction shikimate + ATP = 3-phosphoshikimate + ADP + H(+). The protein operates within metabolic intermediate biosynthesis; chorismate biosynthesis; chorismate from D-erythrose 4-phosphate and phosphoenolpyruvate: step 5/7. Catalyzes the specific phosphorylation of the 3-hydroxyl group of shikimic acid using ATP as a cosubstrate. The protein is Shikimate kinase of Synechococcus sp. (strain JA-3-3Ab) (Cyanobacteria bacterium Yellowstone A-Prime).